Here is a 77-residue protein sequence, read N- to C-terminus: Acyl carrier protein (77 aa).

One can recognise a Carrier domain in the interval 1-76 (MSVEQRVKEI…DVLDYIKSKQ (76 aa)). The residue at position 36 (Ser36) is an O-(pantetheine 4'-phosphoryl)serine.

The protein belongs to the acyl carrier protein (ACP) family. Post-translationally, 4'-phosphopantetheine is transferred from CoA to a specific serine of apo-ACP by AcpS. This modification is essential for activity because fatty acids are bound in thioester linkage to the sulfhydryl of the prosthetic group.

The protein resides in the cytoplasm. The protein operates within lipid metabolism; fatty acid biosynthesis. Functionally, carrier of the growing fatty acid chain in fatty acid biosynthesis. The protein is Acyl carrier protein of Sulfurihydrogenibium sp. (strain YO3AOP1).